Reading from the N-terminus, the 474-residue chain is Lipoprotein lipase (474 aa).

The first 27 residues, Met1–Ala27, serve as a signal peptide directing secretion. Positions Arg32–Thr53 are interaction with GPIHBP1. The cysteines at positions 54 and 67 are disulfide-linked. The N-linked (GlcNAc...) asparagine glycan is linked to Asn70. Tyr121 carries the post-translational modification 3'-nitrotyrosine. The Nucleophile role is filled by Ser159. The active-site Charge relay system is Asp183. 3'-nitrotyrosine is present on Tyr191. Residues Ala194, Arg197, Ser199, and Asp202 each coordinate Ca(2+). Residues Cys243 and Cys266 are joined by a disulfide bond. The segment at Cys243–Cys266 is essential for determining substrate specificity. Residue His268 is the Charge relay system of the active site. Cystine bridges form between Cys291/Cys310 and Cys302/Cys305. The PLAT domain occupies Phe341 to Lys464. Position 343 is a 3'-nitrotyrosine (Tyr343). Asn386 is a glycosylation site (N-linked (GlcNAc...) asparagine). Residues Trp417 to Trp421 are important for interaction with lipoprotein particles. Residues Lys430–Lys434 form an important for heparin binding region. Positions Ile443 to Asp467 are interaction with GPIHBP1. Cys445 and Cys465 form a disulfide bridge.

This sequence belongs to the AB hydrolase superfamily. Lipase family. As to quaternary structure, homodimer. Interacts with GPIHBP1 with 1:1 stoichiometry. Interacts with APOC2; the interaction activates LPL activity in the presence of lipids. Interaction with heparan sulfate proteoglycans is required to protect LPL against loss of activity. Associates with lipoprotein particles in blood plasma. Interacts with LMF1 and SEL1L; interaction with SEL1L is required to prevent aggregation of newly synthesized LPL in the endoplasmic reticulum (ER), and for normal export of LPL from the ER to the extracellular space. Interacts with SORL1; SORL1 acts as a sorting receptor, promoting LPL localization to endosomes and later to lysosomes, leading to degradation of newly synthesized LPL. In terms of processing, tyrosine nitration after lipopolysaccharide (LPS) challenge down-regulates the lipase activity.

The protein resides in the cell membrane. It localises to the secreted. Its subcellular location is the extracellular space. It is found in the extracellular matrix. It catalyses the reaction a triacylglycerol + H2O = a diacylglycerol + a fatty acid + H(+). The enzyme catalyses a 1,2-diacyl-sn-glycero-3-phosphocholine + H2O = a 2-acyl-sn-glycero-3-phosphocholine + a fatty acid + H(+). It carries out the reaction 1,2,3-tri-(9Z-octadecenoyl)-glycerol + H2O = di-(9Z)-octadecenoylglycerol + (9Z)-octadecenoate + H(+). The catalysed reaction is 1,2-di-(9Z-octadecenoyl)-sn-glycero-3-phosphocholine + H2O = (9Z-octadecenoyl)-sn-glycero-3-phosphocholine + (9Z)-octadecenoate + H(+). It catalyses the reaction 1,2,3-tributanoylglycerol + H2O = dibutanoylglycerol + butanoate + H(+). The enzyme catalyses 1,2-dihexadecanoyl-sn-glycero-3-phosphocholine + H2O = hexadecanoyl-sn-glycero-3-phosphocholine + hexadecanoate + H(+). Its activity is regulated as follows. The apolipoprotein APOC2 acts as a coactivator of LPL activity. Ca(2+) binding promotes protein stability and formation of the active homodimer. Interaction with GPIHBP1 protects LPL against inactivation by ANGPTL4. Functionally, key enzyme in triglyceride metabolism. Catalyzes the hydrolysis of triglycerides from circulating chylomicrons and very low density lipoproteins (VLDL), and thereby plays an important role in lipid clearance from the blood stream, lipid utilization and storage. Although it has both phospholipase and triglyceride lipase activities it is primarily a triglyceride lipase with low but detectable phospholipase activity. Mediates margination of triglyceride-rich lipoprotein particles in capillaries. Recruited to its site of action on the luminal surface of vascular endothelium by binding to GPIHBP1 and cell surface heparan sulfate proteoglycans. This Rattus norvegicus (Rat) protein is Lipoprotein lipase (Lpl).